A 263-amino-acid polypeptide reads, in one-letter code: MECCRFGLVSVPVQLFTAVERHTIRFHQVQRGTGDRVRQKRVNERTGQEVPFEEVVKGYPTEDGWVIVDPKELEDIAPGRSRTLEIVGFVDLDEIAPVYFRDTYYLAPSGPQYTKVYGLLREALATANRAGIATFVMRNRQYLAALKAEHEVLAVYLLHWADEVRDPHRELGASLPDHSGASEQELRMAVQLIEAMAIDWDPADYHDTYQQQVQALIDAKRAGGTLEPGIPPPRETEAVDLMQALRASVEHARAGRSGDRDTH.

Positions 6-169 constitute a Ku domain; the sequence is FGLVSVPVQL…WADEVRDPHR (164 aa).

The protein belongs to the prokaryotic Ku family. Homodimer. Interacts with LigD.

Functionally, with LigD forms a non-homologous end joining (NHEJ) DNA repair enzyme, which repairs dsDNA breaks with reduced fidelity. Binds linear dsDNA with 5'- and 3'- overhangs but not closed circular dsDNA nor ssDNA. Recruits and stimulates the ligase activity of LigD. The sequence is that of Non-homologous end joining protein Ku 3 from Saccharopolyspora erythraea (strain ATCC 11635 / DSM 40517 / JCM 4748 / NBRC 13426 / NCIMB 8594 / NRRL 2338).